The following is a 147-amino-acid chain: Arginine vasopressin-induced protein 1 (147 aa).

Disordered stretches follow at residues 1–24 (MGTPASVVSEPPPWQAPIEARGRK) and 104–147 (LANP…QIRH). A compositionally biased stretch (polar residues) spans 105 to 119 (ANPQSATETASSEQY). Basic residues predominate over residues 121 to 134 (HSRKKSARIRRNWR). Residues 137–147 (GPTSYLHQIRH) show a composition bias toward polar residues.

Its function is as follows. May be involved in MAP kinase activation, epithelial sodium channel (ENaC) down-regulation and cell cycling. The polypeptide is Arginine vasopressin-induced protein 1 (AVPI1) (Homo sapiens (Human)).